We begin with the raw amino-acid sequence, 83 residues long: Kappa-theraphotoxin-Cg2b (83 aa).

A signal peptide spans 1–21 (MKGSAFAIILGLVVLCACSFA). Residues 22 to 53 (EDEQDQFASPNELLRSMFLESRHELIPEVEGR) constitute a propeptide that is removed on maturation. 3 disulfides stabilise this stretch: C55/C69, C62/C74, and C68/C78.

This sequence belongs to the neurotoxin 30 (phrixotoxin) family. Expressed by the venom gland.

The protein localises to the secreted. In terms of biological role, probable ion channel inhibitor. This is Kappa-theraphotoxin-Cg2b from Chilobrachys guangxiensis (Chinese earth tiger tarantula).